The primary structure comprises 557 residues: Acetylcholine receptor subunit alpha-L1 (557 aa).

Residues 1–23 form the signal peptide; the sequence is MAAALPPMLLLLLLLLLHHPAAA. The Extracellular portion of the chain corresponds to 24-244; the sequence is NPDAKRLYDD…NITLRRKTLF (221 aa). Asn47 is a glycosylation site (N-linked (GlcNAc...) asparagine). Disulfide bonds link Cys151/Cys165 and Cys224/Cys225. A glycan (N-linked (GlcNAc...) asparagine) is linked at Asn235. The next 3 helical transmembrane spans lie at 245-266, 274-294, and 308-329; these read YTVN…VFYL, IALC…ISEI, and YLLF…VLNV. Topologically, residues 330–500 are cytoplasmic; sequence HYRKPSTHKM…EFDAEDQDWG (171 aa). The chain crosses the membrane as a helical span at residues 501–523; sequence FVAMVLDRLFLWIFTIASIVGTF.

Belongs to the ligand-gated ion channel (TC 1.A.9) family. Acetylcholine receptor (TC 1.A.9.1) subfamily.

It is found in the postsynaptic cell membrane. Its subcellular location is the cell membrane. Its function is as follows. After binding acetylcholine, the AChR responds by an extensive change in conformation that affects all subunits and leads to opening of an ion-conducting channel across the plasma membrane. The protein is Acetylcholine receptor subunit alpha-L1 of Schistocerca gregaria (Desert locust).